Here is a 214-residue protein sequence, read N- to C-terminus: Adenylate kinase (214 aa).

Residue Gly-10 to Thr-15 coordinates ATP. The interval Ser-30 to Val-59 is NMP. Residues Thr-31, Arg-36, Lys-57–Val-59, Gly-85–Arg-88, and Gln-92 contribute to the AMP site. The segment at Gly-122 to Asp-159 is LID. ATP is bound by residues Arg-123 and Val-132–Tyr-133. Arg-156 and Arg-167 together coordinate AMP. Lys-200 contacts ATP.

This sequence belongs to the adenylate kinase family. In terms of assembly, monomer.

It localises to the cytoplasm. The catalysed reaction is AMP + ATP = 2 ADP. The protein operates within purine metabolism; AMP biosynthesis via salvage pathway; AMP from ADP: step 1/1. In terms of biological role, catalyzes the reversible transfer of the terminal phosphate group between ATP and AMP. Plays an important role in cellular energy homeostasis and in adenine nucleotide metabolism. This is Adenylate kinase from Pseudoalteromonas atlantica (strain T6c / ATCC BAA-1087).